Consider the following 534-residue polypeptide: uncharacterized protein (534 aa).

A run of 5 helical transmembrane segments spans residues 4 to 22, 24 to 46, 56 to 75, 82 to 104, and 134 to 156; these read ILVLLCVIALGLLVGRVSF, GISLGTSAILFVALLAGHYGWTI, ALFVYCVGISAGPTFFRGLA, AITGSVIVLTGVAVTWTSARLLG, and PAAVAVGFGVAYPIGIIAVVLFV. The segment at 167-187 is disordered; it reads GDSDGTDSASETSGQSSAEIA. Residues 172–187 show a composition bias toward polar residues; it reads TDSASETSGQSSAEIA. RCK C-terminal domains lie at 180–264 and 265–349; these read GQSS…TLGE and LQDT…AVGH. Transmembrane regions (helical) follow at residues 359 to 378, 382 to 401, 408 to 430, 445 to 467, 479 to 501, and 511 to 533; these read LLSLVAGIVLGIFVGNLSLQ, FSMSLGIAGGPLMVGLILGH, IRGSYPPAAMLLMTEGGLALFLA, MERGAMLCVAAAAIAIIPLLVGF, WQSLGATCGGMTSTPGLAVLTGA, and YVAAYPVALVLITVAAPWLVELI.

Belongs to the AAE transporter (TC 2.A.81) family.

It localises to the cell membrane. This is an uncharacterized protein from Rhodopirellula baltica (strain DSM 10527 / NCIMB 13988 / SH1).